The chain runs to 204 residues: Threonylcarbamoyl-AMP synthase (204 aa).

One can recognise a YrdC-like domain in the interval 10–204 (ADELDLVANY…KDLLAGHILR (195 aa)).

Belongs to the SUA5 family. TsaC subfamily.

Its subcellular location is the cytoplasm. The enzyme catalyses L-threonine + hydrogencarbonate + ATP = L-threonylcarbamoyladenylate + diphosphate + H2O. In terms of biological role, required for the formation of a threonylcarbamoyl group on adenosine at position 37 (t(6)A37) in tRNAs that read codons beginning with adenine. Catalyzes the conversion of L-threonine, HCO(3)(-)/CO(2) and ATP to give threonylcarbamoyl-AMP (TC-AMP) as the acyladenylate intermediate, with the release of diphosphate. In Moraxella catarrhalis (strain BBH18), this protein is Threonylcarbamoyl-AMP synthase.